The following is a 425-amino-acid chain: WD repeat-containing protein jip5 (425 aa).

5 WD repeats span residues proline 9–aspartate 48, arginine 72–lysine 111, glutamate 117–serine 158, isoleucine 221–glutamate 262, and aspartate 318–tyrosine 355. The tract at residues leucine 40–histidine 63 is disordered. Residues methionine 358 to tyrosine 425 are disordered. The segment covering aspartate 367 to aspartate 385 has biased composition (acidic residues). The segment covering asparagine 395–glycine 404 has biased composition (basic residues).

It belongs to the WD repeat WDR55 family.

It is found in the nucleus. Its subcellular location is the nucleolus. The protein is WD repeat-containing protein jip5 (jip5) of Aspergillus niger (strain ATCC MYA-4892 / CBS 513.88 / FGSC A1513).